The chain runs to 384 residues: UPF0496 protein At3g28310/At3g28320 (384 aa).

The stretch at 184 to 215 forms a coiled coil; sequence QESLFDRVTETKERIAKEIEEVQKRISNVNTA. 2 helical membrane-spanning segments follow: residues 217-237 and 242-262; these read IVSH…CIAL and VGAP…VQWV. The stretch at 264–361 forms a coiled coil; that stretch reads VNYVLNNSLE…TTKITEVCET (98 aa).

This sequence belongs to the UPF0496 family.

It localises to the membrane. The polypeptide is UPF0496 protein At3g28310/At3g28320 (Arabidopsis thaliana (Mouse-ear cress)).